Here is a 242-residue protein sequence, read N- to C-terminus: uncharacterized protein (242 aa).

Over residues 1 to 11 the composition is skewed to low complexity; it reads MNFEAASAPSQ. Residues 1–45 are disordered; sequence MNFEAASAPSQQPSPTPAPKTEEPKENGGSEQQADQPENSKKDDV.

The protein to U.parvum UU171.

This is an uncharacterized protein from Ureaplasma parvum serovar 3 (strain ATCC 700970).